Reading from the N-terminus, the 159-residue chain is Sec-independent protein translocase protein TatB (159 aa).

Residues 1–21 (MIDIGLSKMALIGAVALIVIG) form a helical membrane-spanning segment.

It belongs to the TatB family. In terms of assembly, the Tat system comprises two distinct complexes: a TatABC complex, containing multiple copies of TatA, TatB and TatC subunits, and a separate TatA complex, containing only TatA subunits. Substrates initially bind to the TatABC complex, which probably triggers association of the separate TatA complex to form the active translocon.

Its subcellular location is the cell inner membrane. Its function is as follows. Part of the twin-arginine translocation (Tat) system that transports large folded proteins containing a characteristic twin-arginine motif in their signal peptide across membranes. Together with TatC, TatB is part of a receptor directly interacting with Tat signal peptides. TatB may form an oligomeric binding site that transiently accommodates folded Tat precursor proteins before their translocation. This is Sec-independent protein translocase protein TatB from Acidovorax sp. (strain JS42).